Reading from the N-terminus, the 99-residue chain is Putative regulatory protein Kole_1849 (99 aa).

This sequence belongs to the RemA family.

This chain is Putative regulatory protein Kole_1849, found in Kosmotoga olearia (strain ATCC BAA-1733 / DSM 21960 / TBF 19.5.1).